A 604-amino-acid chain; its full sequence is Threonine--tRNA ligase (604 aa).

The tract at residues 197–499 (DHRKLGRELG…LIEEYAGDFP (303 aa)) is catalytic. Zn(2+)-binding residues include cysteine 296, histidine 347, and histidine 476.

This sequence belongs to the class-II aminoacyl-tRNA synthetase family. Homodimer. Zn(2+) serves as cofactor.

The protein localises to the cytoplasm. It catalyses the reaction tRNA(Thr) + L-threonine + ATP = L-threonyl-tRNA(Thr) + AMP + diphosphate + H(+). Catalyzes the attachment of threonine to tRNA(Thr) in a two-step reaction: L-threonine is first activated by ATP to form Thr-AMP and then transferred to the acceptor end of tRNA(Thr). Also edits incorrectly charged L-seryl-tRNA(Thr). The protein is Threonine--tRNA ligase of Synechococcus elongatus (strain ATCC 33912 / PCC 7942 / FACHB-805) (Anacystis nidulans R2).